Here is a 408-residue protein sequence, read N- to C-terminus: MSVMDEIVVTKPQARTSASLEKPSLIGMSREEMGAALREKGVAEKQIKMRVSQLWNWIYVRGVSDFDHMTNVAKDMREMLKQHFTIARPEIVEEQVSNDGTRKWLLRFPPRGAGRPVEIEAVYIPEEGRGTLCISSQVGCTLTCSFCHTGTQRLVRNLTAEEILSQLLLARDRLGDFPDREAPQGTIMPAEGRKVSNIVMMGMGEPLYNFDAVKQALLIATDGDGLSLSRRRVTLSTSGVVPEIFRTGEEIGVMLAISLHAVRDDLRDLLVPINKKYPLKELIEACRTYPGLSNARRITFEYVMLKDVNDSLEDAKGLIKLLKGVPAKINLIPFNPWPGTNYQCSDWEQIEKFADFINSAGYASPIRTPRGRDILAACGQLKSESERMRKTERLAFEAMMIANHGADD.

Residue Glu-120 is the Proton acceptor of the active site. One can recognise a Radical SAM core domain in the interval 126–375 (EEGRGTLCIS…IRTPRGRDIL (250 aa)). Cysteines 133 and 378 form a disulfide. Positions 140, 144, and 147 each coordinate [4Fe-4S] cluster. S-adenosyl-L-methionine is bound by residues 204 to 205 (GE), Ser-236, 258 to 260 (SLH), and Asn-335. Cys-378 serves as the catalytic S-methylcysteine intermediate.

The protein belongs to the radical SAM superfamily. RlmN family. [4Fe-4S] cluster is required as a cofactor.

It localises to the cytoplasm. It carries out the reaction adenosine(2503) in 23S rRNA + 2 reduced [2Fe-2S]-[ferredoxin] + 2 S-adenosyl-L-methionine = 2-methyladenosine(2503) in 23S rRNA + 5'-deoxyadenosine + L-methionine + 2 oxidized [2Fe-2S]-[ferredoxin] + S-adenosyl-L-homocysteine. The catalysed reaction is adenosine(37) in tRNA + 2 reduced [2Fe-2S]-[ferredoxin] + 2 S-adenosyl-L-methionine = 2-methyladenosine(37) in tRNA + 5'-deoxyadenosine + L-methionine + 2 oxidized [2Fe-2S]-[ferredoxin] + S-adenosyl-L-homocysteine. Its function is as follows. Specifically methylates position 2 of adenine 2503 in 23S rRNA and position 2 of adenine 37 in tRNAs. m2A2503 modification seems to play a crucial role in the proofreading step occurring at the peptidyl transferase center and thus would serve to optimize ribosomal fidelity. The sequence is that of Dual-specificity RNA methyltransferase RlmN from Rhizobium johnstonii (strain DSM 114642 / LMG 32736 / 3841) (Rhizobium leguminosarum bv. viciae).